Here is a 603-residue protein sequence, read N- to C-terminus: Nuclear receptor subfamily 2 group C member 1 (603 aa).

The required for interaction with KAT2B stretch occupies residues 1 to 178 (MATIEEIAHQ…RLQRCIAFGM (178 aa)). Residues 110-185 (FDLCVVCGDK…FGMKQDSVQC (76 aa)) constitute a DNA-binding region (nuclear receptor). NR C4-type zinc fingers lie at residues 113-133 (CVVC…CEGC) and 149-168 (CRGS…CQYC). Phosphoserine occurs at positions 197 and 215. The residue at position 220 (Thr-220) is a Phosphothreonine. At Thr-222 the chain carries Phosphothreonine; by MAPK1. Residue Lys-250 forms a Glycyl lysine isopeptide (Lys-Gly) (interchain with G-Cter in SUMO); alternate linkage. Residue Lys-250 forms a Glycyl lysine isopeptide (Lys-Gly) (interchain with G-Cter in SUMO2); alternate linkage. Residues 348–590 (GSVHLITGDS…SVIPHILKME (243 aa)) enclose the NR LBD domain. Residue Ser-581 is modified to Phosphoserine; by PKC. Residues 584–603 (PHILKMEPADYNSQIIGHSI) form a required for interaction with NRIP1 region. Lys-588 participates in a covalent cross-link: Glycyl lysine isopeptide (Lys-Gly) (interchain with G-Cter in SUMO2).

This sequence belongs to the nuclear hormone receptor family. NR2 subfamily. In terms of assembly, homodimer. Heterodimer; binds DNA as a heterodimer with NR2C2 required for chromatin remodeling and for binding to promoter regions such as globin DR1 repeats. Interacts with ESR1; the interaction prevents homodimerization of ESR1 and suppresses its transcriptional activity and cell growth. Interacts with NRIP1 (via its LXXLL motifs); the interaction provides corepressor activity. Interacts with HDAC3 (via the DNA-binding domain). Interacts with HDAC4 (via the DNA-binding domain). Interacts with PIAS1; the interaction is required for sumoylation of NR2C1. Interacts with UBE2I; the interaction is required for sumoylation of NR2C1. Interacts with KAT2B; the interaction acts as a corepressor of gene expression. Post-translationally, sumoylation requires both PIAS1 and UBE2I. Sumoylation appears to dissociate NR2C1 from the PML nuclear bodies. Enhances the interaction with NRIP1 but inhibits interaction with KAT2B. In proliferating cells, stimulation by all-trans retinoic acid, activation of MAPK1-mediated phosphorylation and recruitment to PML bodies with subsequent sumoylation, suppresses OCT4 expression. Phosphorylated on several serine and threonine residues. Phosphorylation on Thr-220, stimulated by all-trans retinoic acid (atRA) mediates PML location and sumoylation in proliferating cells which then modulates its association with effector molecules, KAT2B and NRIP1. Phosphorylation on Ser-581 by PKC is important for protein stability and function as activator of RARB.

Its subcellular location is the nucleus. It localises to the PML body. Its function is as follows. Orphan nuclear receptor. Binds the IR7 element in the promoter of its own gene in an autoregulatory negative feedback mechanism. Primarily repressor of a broad range of genes. Binds to hormone response elements (HREs) consisting of two 5'-AGGTCA-3' half site direct repeat consensus sequences. Together with NR2C2, forms the core of the DRED (direct repeat erythroid-definitive) complex that represses embryonic and fetal globin transcription. Also activator of OCT4 gene expression. May be involved in stem cell proliferation and differentiation. Mediator of retinoic acid-regulated preadipocyte proliferation. The sequence is that of Nuclear receptor subfamily 2 group C member 1 (NR2C1) from Macaca fascicularis (Crab-eating macaque).